We begin with the raw amino-acid sequence, 406 residues long: Phosphopentomutase (406 aa).

Mn(2+)-binding residues include Asp-10, Asp-305, His-310, Asp-346, His-347, and His-358.

It belongs to the phosphopentomutase family. It depends on Mn(2+) as a cofactor.

It localises to the cytoplasm. The catalysed reaction is 2-deoxy-alpha-D-ribose 1-phosphate = 2-deoxy-D-ribose 5-phosphate. It catalyses the reaction alpha-D-ribose 1-phosphate = D-ribose 5-phosphate. It functions in the pathway carbohydrate degradation; 2-deoxy-D-ribose 1-phosphate degradation; D-glyceraldehyde 3-phosphate and acetaldehyde from 2-deoxy-alpha-D-ribose 1-phosphate: step 1/2. In terms of biological role, isomerase that catalyzes the conversion of deoxy-ribose 1-phosphate (dRib-1-P) and ribose 1-phosphate (Rib-1-P) to deoxy-ribose 5-phosphate (dRib-5-P) and ribose 5-phosphate (Rib-5-P), respectively. The protein is Phosphopentomutase of Vibrio cholerae serotype O1 (strain ATCC 39315 / El Tor Inaba N16961).